Consider the following 263-residue polypeptide: Acyl-[acyl-carrier-protein]--UDP-N-acetylglucosamine O-acyltransferase (263 aa).

Belongs to the transferase hexapeptide repeat family. LpxA subfamily. As to quaternary structure, homotrimer.

The protein resides in the cytoplasm. It catalyses the reaction a (3R)-hydroxyacyl-[ACP] + UDP-N-acetyl-alpha-D-glucosamine = a UDP-3-O-[(3R)-3-hydroxyacyl]-N-acetyl-alpha-D-glucosamine + holo-[ACP]. It participates in glycolipid biosynthesis; lipid IV(A) biosynthesis; lipid IV(A) from (3R)-3-hydroxytetradecanoyl-[acyl-carrier-protein] and UDP-N-acetyl-alpha-D-glucosamine: step 1/6. In terms of biological role, involved in the biosynthesis of lipid A, a phosphorylated glycolipid that anchors the lipopolysaccharide to the outer membrane of the cell. This chain is Acyl-[acyl-carrier-protein]--UDP-N-acetylglucosamine O-acyltransferase, found in Xanthomonas campestris pv. campestris (strain 8004).